The following is a 141-amino-acid chain: MSKKNSVAIMTTISAFLFCAVIVAASLSPLAGTGAAANQFNSAGMWSAVGMILVLYFIPFLVYMLGVDAMRYVMAVLCGFGLLIHLSSAGFILMFSFFSDHLLSEVIFVLGVSLAAAAVNVIWFVAAFRSGAEKTSVNTLT.

Helical transmembrane passes span 7 to 27 (VAIM…AASL), 47 to 67 (SAVG…MLGV), 75 to 95 (AVLC…ILMF), and 106 to 126 (VIFV…WFVA).

The protein localises to the cell membrane. This is an uncharacterized protein from Bacillus subtilis (strain 168).